Reading from the N-terminus, the 400-residue chain is Large envelope protein (400 aa).

The residue at position 1 (Met-1) is an N-acetylmethionine. Disordered stretches follow at residues 1–53 (MGGW…DHWP), 88–118 (VPVA…SHPQ), and 145–169 (GSSS…SRTG). Gly-2 carries the N-myristoyl glycine; by host lipid modification. The segment at 2–119 (GGWSSKPRQG…PPLRDSHPQA (118 aa)) is pre-S1. The interval 2–174 (GGWSSKPRQG…SSRTGDPAPN (173 aa)) is pre-S. Residues 2–181 (GGWSSKPRQG…APNMENTTSG (180 aa)) lie on the Virion surface; in external conformation side of the membrane. The Intravirion; in internal conformation segment spans residues 2–253 (GGWSSKPRQG…PGYRWMCLRR (252 aa)). Trp-4 carries an N-linked (GlcNAc...) asparagine glycan. Residues 96–106 (STNRQSGRQPT) are compositionally biased toward polar residues. Residues 120-174 (MQWNSTTFHQALLDPRVRGLYFPAGGSSSGTVNPVPTTASPISSISSRTGDPAPN) form a pre-S2 region. Residues 155–166 (PTTASPISSISS) show a composition bias toward low complexity. Residues 182–202 (FLGPLLVLQAGFFLLTRILTI) form a helical membrane-spanning segment. Residues 203–253 (PQSLDSWWTSLNFLGGAPTCPGQNSQSPTSNHSPTSCPPICPGYRWMCLRR) are Intravirion; in external conformation-facing. Residues 254 to 274 (FIIFLFILLLCLIFLLVLLDY) traverse the membrane as a helical segment. Residues 275 to 348 (QGMLPVCPLL…GASVRFSWLS (74 aa)) are Virion surface-facing. A glycan (N-linked (GlcNAc...) asparagine; by host) is linked at Asn-320. A helical membrane pass occupies residues 349–369 (LLVPFVQWFVGLSPTVWLSVI). Residues 370 to 375 (WMMWYW) lie on the Intravirion side of the membrane. The helical transmembrane segment at 376–398 (GPSLYNILSPFLPLLPIFFCLWV) threads the bilayer. Topologically, residues 399–400 (YI) are virion surface.

This sequence belongs to the orthohepadnavirus major surface antigen family. In terms of assembly, in its internal form (Li-HBsAg), interacts with the capsid protein and with the isoform S. Interacts with host chaperone CANX. As to quaternary structure, associates with host chaperone CANX through its pre-S2 N glycan; this association may be essential for isoform M proper secretion. Interacts with isoform L. Interacts with the antigens of satellite virus HDV (HDVAgs); this interaction is required for encapsidation of HDV genomic RNA. In terms of processing, isoform M is N-terminally acetylated by host at a ratio of 90%, and N-glycosylated by host at the pre-S2 region. Myristoylated.

The protein localises to the virion membrane. Functionally, the large envelope protein exists in two topological conformations, one which is termed 'external' or Le-HBsAg and the other 'internal' or Li-HBsAg. In its external conformation the protein attaches the virus to cell receptors and thereby initiating infection. This interaction determines the species specificity and liver tropism. This attachment induces virion internalization predominantly through caveolin-mediated endocytosis. The large envelope protein also assures fusion between virion membrane and endosomal membrane. In its internal conformation the protein plays a role in virion morphogenesis and mediates the contact with the nucleocapsid like a matrix protein. In terms of biological role, the middle envelope protein plays an important role in the budding of the virion. It is involved in the induction of budding in a nucleocapsid independent way. In this process the majority of envelope proteins bud to form subviral lipoprotein particles of 22 nm of diameter that do not contain a nucleocapsid. This Hepatitis B virus genotype C subtype adr (strain Japan/adr4/1983) (HBV-C) protein is Large envelope protein.